Here is a 366-residue protein sequence, read N- to C-terminus: Chorismate synthase (366 aa).

Residues arginine 48 and arginine 54 each contribute to the NADP(+) site. FMN-binding positions include 132-134 (RSS), 244-245 (NA), glycine 289, 304-308 (KPTSS), and arginine 330.

This sequence belongs to the chorismate synthase family. As to quaternary structure, homotetramer. FMNH2 is required as a cofactor.

The catalysed reaction is 5-O-(1-carboxyvinyl)-3-phosphoshikimate = chorismate + phosphate. It participates in metabolic intermediate biosynthesis; chorismate biosynthesis; chorismate from D-erythrose 4-phosphate and phosphoenolpyruvate: step 7/7. Catalyzes the anti-1,4-elimination of the C-3 phosphate and the C-6 proR hydrogen from 5-enolpyruvylshikimate-3-phosphate (EPSP) to yield chorismate, which is the branch point compound that serves as the starting substrate for the three terminal pathways of aromatic amino acid biosynthesis. This reaction introduces a second double bond into the aromatic ring system. This is Chorismate synthase from Methylobacterium radiotolerans (strain ATCC 27329 / DSM 1819 / JCM 2831 / NBRC 15690 / NCIMB 10815 / 0-1).